The sequence spans 258 residues: Ribosomal RNA large subunit methyltransferase E (258 aa).

S-adenosyl-L-methionine contacts are provided by glycine 58, tryptophan 60, aspartate 78, aspartate 96, and aspartate 120. The active-site Proton acceptor is lysine 160.

It belongs to the class I-like SAM-binding methyltransferase superfamily. RNA methyltransferase RlmE family.

It is found in the cytoplasm. It catalyses the reaction uridine(2552) in 23S rRNA + S-adenosyl-L-methionine = 2'-O-methyluridine(2552) in 23S rRNA + S-adenosyl-L-homocysteine + H(+). Functionally, specifically methylates the uridine in position 2552 of 23S rRNA at the 2'-O position of the ribose in the fully assembled 50S ribosomal subunit. The polypeptide is Ribosomal RNA large subunit methyltransferase E (Methanococcus maripaludis (strain DSM 14266 / JCM 13030 / NBRC 101832 / S2 / LL)).